A 154-amino-acid chain; its full sequence is Heat shock protein beta-3 (154 aa).

A disordered region spans residues 48 to 71; that stretch reads ARGAGTPQALAEDSASTEKPPGEG. The 98-residue stretch at 57–154 folds into the sHSP domain; that stretch reads LAEDSASTEK…VEVKDSLGTK (98 aa).

The protein belongs to the small heat shock protein (HSP20) family.

The protein resides in the cytoplasm. It localises to the nucleus. Its function is as follows. Inhibitor of actin polymerization. The protein is Heat shock protein beta-3 (Hspb3) of Mus musculus (Mouse).